A 249-amino-acid chain; its full sequence is MNTWITAKIIKIKKWKNNLFSVIVNAPISPFTAGQFTKLGYQKKNGKIIQRAYSFVNAPHEKNLEFYMVLIKNGQLTTKLYNLNNTDHIQIKKKSYGFFTLNEIPTCKILWMFATGTGIGPYLSMLKYQKNTEKFQKIVLIHAVRYRHDLTYFNEINNLKNIYNKKLYTQFIISREKTNFSLSGRIPQLLKTEELEKHINLFIENNTSHVMLCGNPDMVKQTQNFLINNKNMKKHLRRKPGQISSENYW.

One can recognise an FAD-binding FR-type domain in the interval 2 to 102 (NTWITAKIIK…KKSYGFFTLN (101 aa)). FAD contacts are provided by residues 51–54 (RAYS), tyrosine 67, 75–77 (QLT), and threonine 117. NADP(+)-binding positions include 144-145 (VR), 174-175 (SR), arginine 185, and 215-217 (NPD). 248–249 (YW) contacts FAD.

It belongs to the ferredoxin--NADP reductase type 1 family. Requires FAD as cofactor.

The protein resides in the cytoplasm. It catalyses the reaction 2 reduced [2Fe-2S]-[ferredoxin] + NADP(+) + H(+) = 2 oxidized [2Fe-2S]-[ferredoxin] + NADPH. It carries out the reaction reduced [flavodoxin] + NADP(+) = oxidized [flavodoxin] + NADPH + 2 H(+). Transports electrons between flavodoxin or ferredoxin and NADPH. The chain is Flavodoxin/ferredoxin--NADP reductase (fpr) from Buchnera aphidicola subsp. Baizongia pistaciae (strain Bp).